The chain runs to 329 residues: Calcium homeostasis modulator protein (329 aa).

At 1 to 14 (MTTSINSVVTVFQN) the chain is on the cytoplasmic side. A helical transmembrane segment spans residues 15 to 35 (VFTNHGSTLLNGILIATTVGG). Over 36 to 53 (QSLVRKLTFSCPCAYPLN) the chain is Extracellular. A helical membrane pass occupies residues 54-74 (IYHSLVFMFGPTAALLLIGIT). Over 75–103 (VNSTTWKLAHGFFFRVRDTRHSWKTTCVS) the chain is Cytoplasmic. A helical transmembrane segment spans residues 104-124 (WIEVLIQSSVAPIAWLFVVFL). The Extracellular segment spans residues 125 to 191 (DGGYYRCYRS…DASYLEAESQ (67 aa)). Asn148 carries N-linked (GlcNAc...) asparagine glycosylation. Residues 192–212 (IYAWGLLLFSGVAAFLVITCN) form a helical membrane-spanning segment. The Cytoplasmic segment spans residues 213–329 (RMCDKYTLVQ…QIIVDETKED (117 aa)).

This sequence belongs to the CALHM family. As to expression, expressed in head and body wall muscles, IL2, ASG, ASI, ASJ, PHA and PHB sensory neurons, and spermatheca.

It localises to the cell membrane. In terms of biological role, pore-forming subunit of a voltage-gated ion channel. Permeable to monovalent cations, divalent cations and anions with selectivity Ca(2+) &gt; Mg(2+) &gt; Na(+) = K(+) &gt; Cl(-). Acts both as a voltage-gated and calcium-activated ion channel. Required for normal locomotion. The chain is Calcium homeostasis modulator protein from Caenorhabditis elegans.